Reading from the N-terminus, the 331-residue chain is Probable cytosolic iron-sulfur protein assembly protein Ciao1 (331 aa).

7 WD repeats span residues 12 to 51, 57 to 96, 97 to 136, 142 to 181, 188 to 227, 246 to 285, and 297 to 331; these read GHKG…WTTK, GHKR…ATLE, GHEN…EFEC, AHSQ…SDWD, SHTS…NDAG, EHSR…KRDA, and AHEQ…KLQE.

The protein belongs to the WD repeat CIA1 family.

Its function is as follows. Essential component of the cytosolic iron-sulfur (Fe/S) protein assembly machinery. Required for the maturation of extramitochondrial Fe/S proteins. This is Probable cytosolic iron-sulfur protein assembly protein Ciao1 from Drosophila virilis (Fruit fly).